A 358-amino-acid polypeptide reads, in one-letter code: Probable cinnamyl alcohol dehydrogenase (358 aa).

Residue C48 coordinates Zn(2+). S50 contacts NADP(+). Positions 70, 71, 101, 104, 107, 115, and 164 each coordinate Zn(2+). NADP(+) is bound by residues T168, G189–G194, S212–K217, T252, G276, and S299–V301.

This sequence belongs to the zinc-containing alcohol dehydrogenase family. Homodimer. It depends on Zn(2+) as a cofactor. In terms of tissue distribution, most actively expressed in stem, hypocotyl and root tissue.

It carries out the reaction (E)-cinnamyl alcohol + NADP(+) = (E)-cinnamaldehyde + NADPH + H(+). The enzyme catalyses (E)-coniferol + NADP(+) = (E)-coniferaldehyde + NADPH + H(+). The catalysed reaction is (E)-sinapyl alcohol + NADP(+) = (E)-sinapaldehyde + NADPH + H(+). It catalyses the reaction (E)-4-coumaroyl alcohol + NADP(+) = (E)-4-coumaraldehyde + NADPH + H(+). It carries out the reaction (E)-caffeyl alcohol + NADP(+) = (E)-caffeyl aldehyde + NADPH + H(+). It participates in aromatic compound metabolism; phenylpropanoid biosynthesis. Functionally, this protein catalyzes the final step in a branch of phenylpropanoid synthesis specific for production of lignin monomers. It acts on coniferyl-, sinapyl-, 4-coumaryl- and cinnamyl-alcohol. This chain is Probable cinnamyl alcohol dehydrogenase (CAD2), found in Medicago sativa (Alfalfa).